A 123-amino-acid polypeptide reads, in one-letter code: ATP synthase epsilon chain (123 aa).

It belongs to the ATPase epsilon chain family. In terms of assembly, F-type ATPases have 2 components, CF(1) - the catalytic core - and CF(0) - the membrane proton channel. CF(1) has five subunits: alpha(3), beta(3), gamma(1), delta(1), epsilon(1). CF(0) has three main subunits: a, b and c.

The protein resides in the cell inner membrane. Its function is as follows. Produces ATP from ADP in the presence of a proton gradient across the membrane. The sequence is that of ATP synthase epsilon chain (atpC) from Helicobacter pylori (strain ATCC 700392 / 26695) (Campylobacter pylori).